The chain runs to 58 residues: Large ribosomal subunit protein uL30 (58 aa).

Belongs to the universal ribosomal protein uL30 family. Part of the 50S ribosomal subunit.

The polypeptide is Large ribosomal subunit protein uL30 (Pseudomonas fluorescens (strain ATCC BAA-477 / NRRL B-23932 / Pf-5)).